The following is a 298-amino-acid chain: N-acetylmuramic acid 6-phosphate etherase (298 aa).

The 164-residue stretch at 55–218 (IHTQVSGGGR…STGLMIKSGK (164 aa)) folds into the SIS domain. Glu-83 serves as the catalytic Proton donor. The active site involves Glu-114.

The protein belongs to the GCKR-like family. MurNAc-6-P etherase subfamily. Homodimer.

The catalysed reaction is N-acetyl-D-muramate 6-phosphate + H2O = N-acetyl-D-glucosamine 6-phosphate + (R)-lactate. It functions in the pathway amino-sugar metabolism; 1,6-anhydro-N-acetylmuramate degradation. Its pathway is amino-sugar metabolism; N-acetylmuramate degradation. The protein operates within cell wall biogenesis; peptidoglycan recycling. In terms of biological role, specifically catalyzes the cleavage of the D-lactyl ether substituent of MurNAc 6-phosphate, producing GlcNAc 6-phosphate and D-lactate. Together with AnmK, is also required for the utilization of anhydro-N-acetylmuramic acid (anhMurNAc) either imported from the medium or derived from its own cell wall murein, and thus plays a role in cell wall recycling. The chain is N-acetylmuramic acid 6-phosphate etherase from Escherichia coli O1:K1 / APEC.